The following is a 196-amino-acid chain: Ribonuclease HII (196 aa).

One can recognise an RNase H type-2 domain in the interval 9–196 (SLIAGVDEVG…APVKRAIGLK (188 aa)). A divalent metal cation contacts are provided by Asp-15, Glu-16, and Asp-107.

Belongs to the RNase HII family. Mn(2+) serves as cofactor. It depends on Mg(2+) as a cofactor.

It localises to the cytoplasm. It carries out the reaction Endonucleolytic cleavage to 5'-phosphomonoester.. Functionally, endonuclease that specifically degrades the RNA of RNA-DNA hybrids. The polypeptide is Ribonuclease HII (Photorhabdus laumondii subsp. laumondii (strain DSM 15139 / CIP 105565 / TT01) (Photorhabdus luminescens subsp. laumondii)).